The following is a 210-amino-acid chain: CLAVATA3/ESR (CLE)-related protein 4A-3 (210 aa).

An N-terminal signal peptide occupies residues 1-21; the sequence is MAKNAMLCLLILRVVLALAFA. Residues 21-83 are required for secretion from the host cytoplasm to the host apoplasm; that stretch reads ATNKKGDEEP…SNQLPNNNWM (63 aa). Residue Asn-32 is glycosylated (N-linked (GlcNAc...) asparagine). The tract at residues 116–210 is disordered; that stretch reads RKTGMHSQRH…APAGPDPIHH (95 aa). 2 stretches are compositionally biased toward basic and acidic residues: residues 125-137 and 144-200; these read HHEE…EKRV and PIHH…EKRG. The A-1 repeat unit spans residues 127–135; it reads EETTLEQEK. The interval 127 to 198 is 4 X approximate repeat A; the sequence is EETTLEQEKR…HEDTTLEQEK (72 aa). The stretch at 136 to 147 is one CLE-1 repeat; that stretch reads RVAGAGPDPIHH. The tract at residues 136–210 is 4 X approximate repeat CLE; the sequence is RVAGAGPDPI…APAGPDPIHH (75 aa). One copy of the A-2 repeat lies at 148–156; it reads QDTTLEQEK. A CLE-2 repeat occupies 157–168; it reads RAVPAGPDPKHH. An A-3 repeat occupies 169 to 177; that stretch reads EETTLEQEK. The CLE-3 repeat unit spans residues 178–189; that stretch reads RAVPAGPDPKHH. The stretch at 190 to 198 is one A-4 repeat; the sequence is EDTTLEQEK. Residues 199–210 form a CLE-4 repeat; the sequence is RGAPAGPDPIHH.

It belongs to the CLV3/ESR signal peptide family. As to expression, highly expressed exclusively within the dorsal esophageal gland cell during syncytium formation in host plants.

It is found in the secreted. The protein localises to the host cytoplasm. Its subcellular location is the host extracellular space. It localises to the extracellular space. The protein resides in the apoplast. Mimics host plant CLE extracellular signal peptides that regulate cell fate. May play a role in the differentiation or division of feeding cells (syncytia) induced in plant roots during infection. This Globodera rostochiensis (Golden nematode worm) protein is CLAVATA3/ESR (CLE)-related protein 4A-3 (CLE-4A-3).